The sequence spans 710 residues: Iron-sulfur clusters transporter ATM1, mitochondrial (710 aa).

The N-terminal 38 residues, 1 to 38 (MWLSLPRSGYGSVATLTSKRVLACLTPLRQFSTSPAVS), are a transit peptide targeting the mitochondrion. Residues 35-52 (PAVSNANHKNVDNINKSP) are compositionally biased toward polar residues. The interval 35–83 (PAVSNANHKNVDNINKSPANDAANNAVEKGDKPTTSPEKLATKAEKSSA) is disordered. The Mitochondrial matrix portion of the chain corresponds to 39–129 (NANHKNVDNI…PKGKTSVKFR (91 aa)). Residues 130–151 (VLVAVALLVGAKLLNVQVPFFF) form a helical membrane-spanning segment. An ABC transmembrane type-1 domain is found at 130–419 (VLVAVALLVG…LGSVYRDLRQ (290 aa)). Residues 152–173 (KEIIDDMNIEWNSATALGVGIT) lie on the Mitochondrial intermembrane side of the membrane. The helical transmembrane segment at 174-197 (ALIFSYGAARFGAVLFGELRNAIF) threads the bilayer. Over 198–246 (ASVAQKAIKEVATNVFRHLLKLDMAFHLSRQTGGITRAIDRGTKGISFV) the chain is Mitochondrial matrix. Residues 247-270 (LSSMVFHIIPIALEISLVCGILSY) traverse the membrane as a helical segment. Asn271 is a topological domain (mitochondrial intermembrane). Residues 272–292 (FGWKYALVTGATMVSYAIFTI) traverse the membrane as a helical segment. At 293–358 (TTTSWRTKFR…ASIKIATSLA (66 aa)) the chain is on the mitochondrial matrix side. Glutathione-binding positions include 298–302 (RTKFR) and 361–364 (NSGQ). A helical transmembrane segment spans residues 359-377 (FLNSGQNLIFSSALTAMMY). The Mitochondrial intermembrane portion of the chain corresponds to 378 to 392 (MTCCGVADGSLTVGD). Residues 393–414 (LVLVNQLVFQLSVPLNFLGSVY) form a helical membrane-spanning segment. Gly411 lines the glutathione pocket. At 415–710 (RDLRQSLLDM…AEEKAAKKDV (296 aa)) the chain is on the mitochondrial matrix side. One can recognise an ABC transporter domain in the interval 453 to 687 (IRFENVTYGY…DGLYKSMWDA (235 aa)). ATP contacts are provided by residues Tyr462 and 486-497 (GPSGSGKSTILK).

It belongs to the ABC transporter superfamily. ABCB family. Heavy Metal importer (TC 3.A.1.210) subfamily. As to quaternary structure, homodimer.

Its subcellular location is the mitochondrion inner membrane. In terms of biological role, performs an essential function in the generation of cytoplasmic iron-sulfur proteins by mediating the ATP-dependent export of Fe/S cluster precursors synthesized by NFS1 and other mitochondrial proteins. Hydrolyzes ATP. Binds glutathione and may function by transporting a glutathione-conjugated iron-sulfur compound. This chain is Iron-sulfur clusters transporter ATM1, mitochondrial, found in Yarrowia lipolytica (strain CLIB 122 / E 150) (Yeast).